Reading from the N-terminus, the 544-residue chain is Probable protein kinase UbiB (544 aa).

Positions Glu-123 to Leu-501 constitute a Protein kinase domain. ATP-binding positions include Leu-129–Val-137 and Lys-152. The Proton acceptor role is filled by Asp-287. Helical transmembrane passes span Ala-496–Val-516 and Ala-519–Trp-539.

This sequence belongs to the ABC1 family. UbiB subfamily.

Its subcellular location is the cell inner membrane. It participates in cofactor biosynthesis; ubiquinone biosynthesis [regulation]. Its function is as follows. Is probably a protein kinase regulator of UbiI activity which is involved in aerobic coenzyme Q (ubiquinone) biosynthesis. This Vibrio campbellii (strain ATCC BAA-1116) protein is Probable protein kinase UbiB.